A 246-amino-acid chain; its full sequence is 3-deoxy-manno-octulosonate cytidylyltransferase (246 aa).

Belongs to the KdsB family.

It localises to the cytoplasm. The catalysed reaction is 3-deoxy-alpha-D-manno-oct-2-ulosonate + CTP = CMP-3-deoxy-beta-D-manno-octulosonate + diphosphate. It participates in nucleotide-sugar biosynthesis; CMP-3-deoxy-D-manno-octulosonate biosynthesis; CMP-3-deoxy-D-manno-octulosonate from 3-deoxy-D-manno-octulosonate and CTP: step 1/1. Its pathway is bacterial outer membrane biogenesis; lipopolysaccharide biosynthesis. Functionally, activates KDO (a required 8-carbon sugar) for incorporation into bacterial lipopolysaccharide in Gram-negative bacteria. The chain is 3-deoxy-manno-octulosonate cytidylyltransferase from Leptospira biflexa serovar Patoc (strain Patoc 1 / Ames).